The primary structure comprises 237 residues: Cysteine-rich venom protein ENH2 (237 aa).

An N-terminal signal peptide occupies residues 1–18 (MIVFILLSLAAVLQQFVA). The region spanning 37–165 (VDMHNSFRRS…PYNYFYVCQY (129 aa)) is the SCP domain. 7 disulfide bridges follow: cysteine 74-cysteine 152, cysteine 91-cysteine 166, cysteine 147-cysteine 163, cysteine 185-cysteine 192, cysteine 188-cysteine 197, cysteine 210-cysteine 228, and cysteine 219-cysteine 232. Residues 201-237 (CPITNTFTNCDSLLQQNSCEDSYIKTNCGASCFGQDK) enclose the ShKT domain.

It belongs to the CRISP family. Expressed by the venom gland.

It is found in the secreted. Functionally, blocks contraction of smooth muscle elicited by high potassium-induced depolarization, but does not block caffeine-stimulated contraction. May target voltage-gated calcium channels on smooth muscle. The chain is Cysteine-rich venom protein ENH2 from Pseudoferania polylepis (Macleay's water snake).